Here is a 150-residue protein sequence, read N- to C-terminus: D-aminoacyl-tRNA deacylase (150 aa).

The short motif at 137 to 138 (GP) is the Gly-cisPro motif, important for rejection of L-amino acids element.

Belongs to the DTD family. Homodimer.

It localises to the cytoplasm. It carries out the reaction glycyl-tRNA(Ala) + H2O = tRNA(Ala) + glycine + H(+). The enzyme catalyses a D-aminoacyl-tRNA + H2O = a tRNA + a D-alpha-amino acid + H(+). In terms of biological role, an aminoacyl-tRNA editing enzyme that deacylates mischarged D-aminoacyl-tRNAs. Also deacylates mischarged glycyl-tRNA(Ala), protecting cells against glycine mischarging by AlaRS. Acts via tRNA-based rather than protein-based catalysis; rejects L-amino acids rather than detecting D-amino acids in the active site. By recycling D-aminoacyl-tRNA to D-amino acids and free tRNA molecules, this enzyme counteracts the toxicity associated with the formation of D-aminoacyl-tRNA entities in vivo and helps enforce protein L-homochirality. The protein is D-aminoacyl-tRNA deacylase of Listeria monocytogenes serotype 4b (strain CLIP80459).